The chain runs to 307 residues: Membrane protein insertase YidC 1 (307 aa).

The signal sequence occupies residues 1-22 (MKSKKGLTLTITLGTLALFLSG). A lipid anchor (N-palmitoyl cysteine) is attached at Cys23. Cys23 carries S-diacylglycerol cysteine lipidation. The next 5 membrane-spanning stretches (helical) occupy residues 59–79 (YGWA…PMMI), 136–156 (GIGC…YYAI), 177–197 (LILA…SMIG), 205–225 (TMRL…MSAP), and 226–246 (AGLG…TLII). Residues 260 to 307 (ELKKHPIKTPTPTQPKPINATESKPSHPRPQNNAGRGRNAGKQQRHHK) form a disordered region.

This sequence belongs to the OXA1/ALB3/YidC family. Type 2 subfamily.

It localises to the cell membrane. In terms of biological role, required for the insertion and/or proper folding and/or complex formation of integral membrane proteins into the membrane. Involved in integration of membrane proteins that insert both dependently and independently of the Sec translocase complex, as well as at least some lipoproteins. The protein is Membrane protein insertase YidC 1 of Lactiplantibacillus plantarum (strain ATCC BAA-793 / NCIMB 8826 / WCFS1) (Lactobacillus plantarum).